Here is a 79-residue protein sequence, read N- to C-terminus: D-alanyl carrier protein (79 aa).

Residues 1-76 enclose the Carrier domain; that stretch reads MKEQIFDIIE…KIAARVQEKK (76 aa). O-(pantetheine 4'-phosphoryl)serine is present on serine 34.

The protein belongs to the DltC family. In terms of processing, 4'-phosphopantetheine is transferred from CoA to a specific serine of apo-DCP.

It is found in the cytoplasm. Its pathway is cell wall biogenesis; lipoteichoic acid biosynthesis. Functionally, carrier protein involved in the D-alanylation of lipoteichoic acid (LTA). The loading of thioester-linked D-alanine onto DltC is catalyzed by D-alanine--D-alanyl carrier protein ligase DltA. The DltC-carried D-alanyl group is further transferred to cell membrane phosphatidylglycerol (PG) by forming an ester bond, probably catalyzed by DltD. D-alanylation of LTA plays an important role in modulating the properties of the cell wall in Gram-positive bacteria, influencing the net charge of the cell wall. This chain is D-alanyl carrier protein, found in Lactococcus lactis subsp. lactis (strain IL1403) (Streptococcus lactis).